The primary structure comprises 152 residues: Protein CHLOROPLAST VESICULATION (152 aa).

The transit peptide at 1-22 (MAGRISCCLNLPPLDSNSAQSL) directs the protein to the chloroplast. A helical membrane pass occupies residues 48 to 65 (CSFVLGVAATVVIGGIQI). The interval 92-152 (RWSDKRTCPP…RVNRGGCFSV (61 aa)) is important for chloroplast destabilization and the formation of CV-containing vesicles.

In terms of assembly, interacts with the photosystem II subunit PsbO1 via its C-terminal region in the chloroplast thylakoid membrane and in CV-containing vesicles (CCVs). In terms of tissue distribution, mostly expressed in senescent and mature leaves but not in young leaves.

The protein localises to the plastid. It localises to the chloroplast membrane. It is found in the chloroplast thylakoid membrane. Its subcellular location is the chloroplast envelope. The protein resides in the vacuole. The protein localises to the vesicle. In terms of biological role, triggers stress-induced chloroplast degradation, independently of autophagy and senescence-associated vacuoles. After targeting to the chloroplast, triggers its destabilization and subsequent disassembly, inducing the formation of CV-containing vesicles (CCVs) carrying stromal proteins, envelope membrane proteins, and thylakoid membrane proteins which are released from the chloroplasts and mobilized to the vacuole for proteolysis. This chain is Protein CHLOROPLAST VESICULATION, found in Arabidopsis thaliana (Mouse-ear cress).